The chain runs to 400 residues: Nicotinate phosphoribosyltransferase (400 aa).

A Phosphohistidine; by autocatalysis modification is found at His-220.

Belongs to the NAPRTase family. In terms of processing, transiently phosphorylated on a His residue during the reaction cycle. Phosphorylation strongly increases the affinity for substrates and increases the rate of nicotinate D-ribonucleotide production. Dephosphorylation regenerates the low-affinity form of the enzyme, leading to product release.

The enzyme catalyses nicotinate + 5-phospho-alpha-D-ribose 1-diphosphate + ATP + H2O = nicotinate beta-D-ribonucleotide + ADP + phosphate + diphosphate. Its pathway is cofactor biosynthesis; NAD(+) biosynthesis; nicotinate D-ribonucleotide from nicotinate: step 1/1. Catalyzes the synthesis of beta-nicotinate D-ribonucleotide from nicotinate and 5-phospho-D-ribose 1-phosphate at the expense of ATP. This is Nicotinate phosphoribosyltransferase from Shigella boydii serotype 18 (strain CDC 3083-94 / BS512).